We begin with the raw amino-acid sequence, 105 residues long: Thioredoxin (105 aa).

One can recognise a Thioredoxin domain in the interval methionine 1–isoleucine 105. The cysteines at positions 30 and 33 are disulfide-linked.

It belongs to the thioredoxin family.

In terms of biological role, component of the thioredoxin-thioredoxin reductase system. Participates in various redox reactions through the reversible oxidation of its active center dithiol to a disulfide and catalyzes dithiol-disulfide exchange reactions. This Rickettsia conorii (strain ATCC VR-613 / Malish 7) protein is Thioredoxin (trxA).